Reading from the N-terminus, the 281-residue chain is E3 ubiquitin-protein ligase MARCHF5 (281 aa).

An RING-CH-type zinc finger spans residues 9–78 (LPQTMDRSCW…PQCNAEYLIV (70 aa)). Positions 17, 20, 36, 38, 46, 49, 68, and 71 each coordinate Zn(2+). 4 consecutive transmembrane segments (helical) span residues 102-122 (FAAA…YGAV), 142-162 (PLFL…GKMI), 212-232 (ILCG…LMFS), and 241-261 (TILG…YFKQ).

It is found in the mitochondrion outer membrane. The protein resides in the endoplasmic reticulum membrane. It carries out the reaction S-ubiquitinyl-[E2 ubiquitin-conjugating enzyme]-L-cysteine + [acceptor protein]-L-lysine = [E2 ubiquitin-conjugating enzyme]-L-cysteine + N(6)-ubiquitinyl-[acceptor protein]-L-lysine.. It functions in the pathway protein modification; protein ubiquitination. In terms of biological role, mitochondrial E3 ubiquitin-protein ligase that plays a crucial role in the control of mitochondrial morphology by acting as a positive regulator of mitochondrial fission. May play a role in the prevention of cell senescence acting as a regulator of mitochondrial quality control. This is E3 ubiquitin-protein ligase MARCHF5 (MARCHF5) from Gallus gallus (Chicken).